The chain runs to 390 residues: tRNA-specific 2-thiouridylase MnmA (390 aa).

ATP-binding positions include 36 to 43 (GMSGGVDS) and Met62. Residues 122-124 (NPD) are interaction with target base in tRNA. Cys127 serves as the catalytic Nucleophile. A disulfide bridge links Cys127 with Cys223. Gly151 contacts ATP. The interval 173-175 (KDQ) is interaction with tRNA. The active-site Cysteine persulfide intermediate is Cys223. An interaction with tRNA region spans residues 335–336 (RY).

Belongs to the MnmA/TRMU family.

Its subcellular location is the cytoplasm. The enzyme catalyses S-sulfanyl-L-cysteinyl-[protein] + uridine(34) in tRNA + AH2 + ATP = 2-thiouridine(34) in tRNA + L-cysteinyl-[protein] + A + AMP + diphosphate + H(+). Functionally, catalyzes the 2-thiolation of uridine at the wobble position (U34) of tRNA, leading to the formation of s(2)U34. This is tRNA-specific 2-thiouridylase MnmA from Marinomonas sp. (strain MWYL1).